The primary structure comprises 362 residues: Carbamoyl phosphate synthase small chain (362 aa).

The tract at residues 1–169 is CPSase; the sequence is MGKRLLILED…TKTAYPAPGV (169 aa). Positions 46, 220, and 222 each coordinate L-glutamine. One can recognise a Glutamine amidotransferase type-1 domain in the interval 172-358; sequence NIVLVDFGLK…LELIDAFQLE (187 aa). Catalysis depends on cysteine 247, which acts as the Nucleophile. Methionine 248, glutamine 251, asparagine 289, glycine 291, and tyrosine 292 together coordinate L-glutamine. Residues histidine 331 and aspartate 333 contribute to the active site.

It belongs to the CarA family. Composed of two chains; the small (or glutamine) chain promotes the hydrolysis of glutamine to ammonia, which is used by the large (or ammonia) chain to synthesize carbamoyl phosphate. Tetramer of heterodimers (alpha,beta)4.

The catalysed reaction is hydrogencarbonate + L-glutamine + 2 ATP + H2O = carbamoyl phosphate + L-glutamate + 2 ADP + phosphate + 2 H(+). It catalyses the reaction L-glutamine + H2O = L-glutamate + NH4(+). The protein operates within amino-acid biosynthesis; L-arginine biosynthesis; carbamoyl phosphate from bicarbonate: step 1/1. Its pathway is pyrimidine metabolism; UMP biosynthesis via de novo pathway; (S)-dihydroorotate from bicarbonate: step 1/3. Its function is as follows. Small subunit of the glutamine-dependent carbamoyl phosphate synthetase (CPSase). CPSase catalyzes the formation of carbamoyl phosphate from the ammonia moiety of glutamine, carbonate, and phosphate donated by ATP, constituting the first step of 2 biosynthetic pathways, one leading to arginine and/or urea and the other to pyrimidine nucleotides. The small subunit (glutamine amidotransferase) binds and cleaves glutamine to supply the large subunit with the substrate ammonia. In Streptococcus mutans serotype c (strain ATCC 700610 / UA159), this protein is Carbamoyl phosphate synthase small chain.